The sequence spans 601 residues: Glutathione-regulated potassium-efflux system protein KefB (601 aa).

A run of 13 helical transmembrane segments spans residues 4–24 (SDFL…VPLA), 29–49 (IGAV…GLGF), 55–75 (EILH…GLEL), 87–107 (IFGV…GLLM), 115–135 (AAVV…LQLM), 152–172 (VLLF…LLAG), 177–197 (HFDW…LIGG), 207–227 (FIAA…LVLG), 230–250 (LFMD…GVLL), 268–288 (GLLL…GVLY), 291–311 (LLWV…VLYL), 324–344 (MQFA…FSSA), and 356–376 (ALLL…MKLV). The RCK N-terminal domain maps to 400–519 (KPQVIVVGFG…AGVTQFSRET (120 aa)).

It belongs to the monovalent cation:proton antiporter 2 (CPA2) transporter (TC 2.A.37) family. KefB subfamily. In terms of assembly, interacts with the regulatory subunit KefG.

It localises to the cell inner membrane. In terms of biological role, pore-forming subunit of a potassium efflux system that confers protection against electrophiles. Catalyzes K(+)/H(+) antiport. The sequence is that of Glutathione-regulated potassium-efflux system protein KefB from Escherichia coli O127:H6 (strain E2348/69 / EPEC).